A 311-amino-acid chain; its full sequence is Ribonuclease HIII (311 aa).

An RNase H type-2 domain is found at 95–311 (MSIVGSDEVG…NTEKAFRLLK (217 aa)). A divalent metal cation contacts are provided by Asp101, Glu102, and Asp206.

Belongs to the RNase HII family. RnhC subfamily. Requires Mn(2+) as cofactor. It depends on Mg(2+) as a cofactor.

Its subcellular location is the cytoplasm. The catalysed reaction is Endonucleolytic cleavage to 5'-phosphomonoester.. In terms of biological role, endonuclease that specifically degrades the RNA of RNA-DNA hybrids. The sequence is that of Ribonuclease HIII from Bacillus cereus (strain 03BB102).